Reading from the N-terminus, the 357-residue chain is MTELNFHLLPIISDRFTTTTTTSPSFSSHSSSSSSLLSFTKRRRKHQPLVSSIRMEQSRSRNRKDKVVVILGATGAGKSRLSVDLATRFPSEIINSDKIQVYEGLEITTNQITLQDRRGVPHHLLGVINPEHGELTAGEFRSAASNVVKEITSRQKVPIIAGGSNSFVHALLAQRFDPKFDPFSSGSCLISSDLRYECCFIWVDVSETVLYEYLLRRVDEMMDSGMFEELSRFYDPVKSGLETRFGIRKAIGVPEFDGYFKEYPPEKKMIKWDALRKAAYDKAVDDIKRNTWTLAKRQVKKIEMLKDAGWEIERVDATASFKAVMMKSSSEKKWRENWEEQVLEPSVKIVKRHLVQN.

A chloroplast-targeting transit peptide spans 1–71 (MTELNFHLLP…NRKDKVVVIL (71 aa)). Low complexity predominate over residues 20–39 (TTTSPSFSSHSSSSSSLLSF). Residues 20 to 58 (TTTSPSFSSHSSSSSSLLSFTKRRRKHQPLVSSIRMEQS) form a disordered region. 72-79 (GATGAGKS) contacts ATP.

It belongs to the IPP transferase family. As to expression, expressed in the vascular stele of the roots, in the xylem precursor cell files in the root tip, in leaf axils, ovules, and immature seeds.

It is found in the plastid. Its subcellular location is the chloroplast. It catalyses the reaction dimethylallyl diphosphate + AMP = N(6)-(dimethylallyl)adenosine 5'-phosphate + diphosphate. The catalysed reaction is dimethylallyl diphosphate + ADP = N(6)-(dimethylallyl)adenosine 5'-diphosphate + diphosphate. The enzyme catalyses dimethylallyl diphosphate + ATP = N(6)-(dimethylallyl)adenosine 5'-triphosphate + diphosphate. Involved in cytokinin biosynthesis. Catalyzes the transfer of an isopentenyl group from dimethylallyl diphosphate (DMAPP) to ATP, ADP and AMP. Adenine, adenosine, isopentenylpyrophosphate and 1-hydroxy-2-methyl-2-(E)-butenyl 4-diphosphate (HMBDP) are not used as substrates. The sequence is that of Adenylate isopentenyltransferase 1, chloroplastic (IPT1) from Arabidopsis thaliana (Mouse-ear cress).